Consider the following 1272-residue polypeptide: Myosin-binding protein C, cardiac-type (1272 aa).

The interval 95–147 is disordered; that stretch reads KEPEKSEPVAPAEASPAPAASELPAPPVESNQNPEVPPAETQPEEPVDPIGLF. The segment covering 102–117 has biased composition (low complexity); the sequence is PVAPAEASPAPAASEL. The region spanning 137 to 252 is the Ig-like C2-type 1 domain; that stretch reads PEEPVDPIGL…NLIVNEAPVS (116 aa). Phosphoserine; by PKA and PKC is present on Ser-265. Thr-274 bears the Phosphothreonine; by PKA and PKC mark. Position 300 is a phosphoserine; by PKA (Ser-300). Ig-like C2-type domains are found at residues 359–451, 452–542, 543–640, and 644–763; these read KKST…VKEP, PILI…VQEK, KLEV…FVPR, and PKIH…ADIT. Fibronectin type-III domains follow at residues 772-868 and 870-965; these read PPEA…IAPP and EPTH…VQEI. The region spanning 969-1057 is the Ig-like C2-type 6 domain; sequence PKICVPRHLR…ENMTDTVAIT (89 aa). The 96-residue stretch at 1066 to 1161 folds into the Fibronectin type-III 3 domain; that stretch reads PPQNIKLADV…TKNPAYIQKT (96 aa). Ser-1169 is modified (phosphoserine; by PKC). Residues 1179–1263 enclose the Ig-like C2-type 7 domain; sequence PKFTHPLVNR…VNERGEAEIE (85 aa).

This sequence belongs to the immunoglobulin superfamily. MyBP family. Post-translationally, substrate for phosphorylation by PKA and PKC. Reversible phosphorylation appears to modulate contraction. Expressed specifically in cardiac muscle among adult tissues, but is also expressed transiently in the skeletal muscle at early developmental stages. Isoform Type I is found in embryonic skeletal muscle and isoform Type II is found in both embryonic skeletal and cardiac muscle.

In terms of biological role, thick filament-associated protein located in the crossbridge region of vertebrate striated muscle A bands. In vitro it binds MHC, F-actin and native thin filaments, and modifies the activity of actin-activated myosin ATPase. It may modulate muscle contraction or may play a more structural role. May be involved in the early phase of myofibrillogenesis. The polypeptide is Myosin-binding protein C, cardiac-type (MYBPC3) (Gallus gallus (Chicken)).